The primary structure comprises 306 residues: Follistatin-related protein 1 (306 aa).

Residues 1–18 form the signal peptide; sequence MWKRWLALALVTIALVHG. Positions 28–51 constitute a Follistatin-like domain; the sequence is ICANVFCGAGRECAVTEKGEPTCL. Disulfide bonds link C29/C40, C34/C50, C52/C82, C56/C75, and C64/C96. The 53-residue stretch at 46-98 folds into the Kazal-like domain; the sequence is GEPTCLCIEQCKPHKRPVCGSNGKTYLNHCELHRDACLTGSKIQVDYDGHCKE. N-linked (GlcNAc...) asparagine glycosylation occurs at N142. The region spanning 142–176 is the EF-hand 1 domain; that stretch reads NYSEILDKYFKSFDNGDSHLDSSEFLKFVEQNETA. S163 is subject to Phosphoserine. 2 N-linked (GlcNAc...) asparagine glycosylation sites follow: N173 and N178. The EF-hand 2 domain occupies 191 to 226; the sequence is LRGLCVDALIELSDENADWKLSFQEFLKCLNPSFNP. In terms of domain architecture, VWFC spans 231–285; sequence CALEDETYADGAETEVDCNRCVCSCGHWVCTAMTCDGKNQKGVQTHTEEEMTRYA.

As to quaternary structure, homodimer. Interacts with SCN10A. Interacts with DIP2A; DIP2A may act as a cell surface receptor for FSTL1. Interacts with BMP4. Interacts with CD14; this interaction promotes TL4-mediated signaling cascade.

The protein localises to the secreted. Functionally, secreted glycoprotein that is involved in various physiological processes, such as angiogenesis, regulation of the immune response, cell proliferation and differentiation. Plays a role in the development of the central nervous system, skeletal system, lungs, and ureter. Promotes endothelial cell survival, migration and differentiation into network structures in an AKT-dependent manner. Also promotes survival of cardiac myocytes. Initiates various signaling cascades by activating different receptors on the cell surface such as DIP2A, TLR4 or BMP receptors. This is Follistatin-related protein 1 (Fstl1) from Rattus norvegicus (Rat).